We begin with the raw amino-acid sequence, 380 residues long: tRNA (guanine(26)-N(2))-dimethyltransferase (380 aa).

A Trm1 methyltransferase domain is found at 2 to 374; it reads ITVNEGSVTI…AGIGEIEEVL (373 aa). The S-adenosyl-L-methionine site is built by arginine 35, arginine 65, aspartate 83, aspartate 109, and alanine 110. Residues cysteine 242, cysteine 245, cysteine 261, and cysteine 264 each contribute to the Zn(2+) site.

It belongs to the class I-like SAM-binding methyltransferase superfamily. Trm1 family.

The catalysed reaction is guanosine(26) in tRNA + 2 S-adenosyl-L-methionine = N(2)-dimethylguanosine(26) in tRNA + 2 S-adenosyl-L-homocysteine + 2 H(+). In terms of biological role, dimethylates a single guanine residue at position 26 of a number of tRNAs using S-adenosyl-L-methionine as donor of the methyl groups. The sequence is that of tRNA (guanine(26)-N(2))-dimethyltransferase from Methanothermobacter thermautotrophicus (strain ATCC 29096 / DSM 1053 / JCM 10044 / NBRC 100330 / Delta H) (Methanobacterium thermoautotrophicum).